Reading from the N-terminus, the 146-residue chain is Hemoglobin subunit beta (146 aa).

Residue Val1 is modified to N-acetylvaline. The Globin domain occupies 2-146 (HLTGEEKSAV…VANALAHKYH (145 aa)). Thr12 carries the post-translational modification Phosphothreonine. A Phosphoserine modification is found at Ser44. Lys59 is modified (N6-acetyllysine). Residue His63 participates in heme b binding. Position 82 is an N6-acetyllysine (Lys82). Residue His92 participates in heme b binding. S-nitrosocysteine is present on Cys93. Position 144 is an N6-acetyllysine (Lys144).

It belongs to the globin family. Heterotetramer of two alpha chains and two beta chains. As to expression, red blood cells.

Functionally, involved in oxygen transport from the lung to the various peripheral tissues. This Leontocebus fuscicollis (Brown-mantled tamarin) protein is Hemoglobin subunit beta (HBB).